The chain runs to 223 residues: Acetate CoA-transferase subunit beta (223 aa).

The active site involves Glu-46.

This sequence belongs to the 3-oxoacid CoA-transferase subunit B family. In terms of assembly, heterotetramer composed of two alpha subunits (AtoD) and two beta subunits (AtoA).

The enzyme catalyses an acyl-CoA + acetate = a carboxylate + acetyl-CoA. The catalysed reaction is acetoacetate + acetyl-CoA = acetoacetyl-CoA + acetate. The protein operates within lipid metabolism; short-chain fatty acid metabolism. In terms of biological role, coenzyme A transferase which is involved in short-chain fatty acid degradation and catalyzes the activation of short-chain fatty acids to their respective CoA thiolesters. This is Acetate CoA-transferase subunit beta (atoA) from Haemophilus influenzae (strain ATCC 51907 / DSM 11121 / KW20 / Rd).